The following is an 88-amino-acid chain: Ribonuclease P protein component 1 (88 aa).

Belongs to the eukaryotic/archaeal RNase P protein component 1 family. Consists of a catalytic RNA component and at least 4-5 protein subunits.

It localises to the cytoplasm. It carries out the reaction Endonucleolytic cleavage of RNA, removing 5'-extranucleotides from tRNA precursor.. In terms of biological role, part of ribonuclease P, a protein complex that generates mature tRNA molecules by cleaving their 5'-ends. The chain is Ribonuclease P protein component 1 from Nitrosopumilus maritimus (strain SCM1).